Here is a 260-residue protein sequence, read N- to C-terminus: Putative protein phosphatase 2C-like protein 44 (260 aa).

Positions 41–259 (YYTVDRLSYA…SSISCVVIRF (219 aa)) constitute a PPM-type phosphatase domain.

It belongs to the PP2C family.

The protein is Putative protein phosphatase 2C-like protein 44 of Arabidopsis thaliana (Mouse-ear cress).